The primary structure comprises 101 residues: Large ribosomal subunit protein uL23 (101 aa).

It belongs to the universal ribosomal protein uL23 family. Part of the 50S ribosomal subunit. Contacts protein L29, and trigger factor when it is bound to the ribosome.

One of the early assembly proteins it binds 23S rRNA. One of the proteins that surrounds the polypeptide exit tunnel on the outside of the ribosome. Forms the main docking site for trigger factor binding to the ribosome. This Kocuria rhizophila (strain ATCC 9341 / DSM 348 / NBRC 103217 / DC2201) protein is Large ribosomal subunit protein uL23.